A 263-amino-acid chain; its full sequence is Lens fiber major intrinsic protein (263 aa).

Residues 1-9 (MWELRSASF) are Cytoplasmic-facing. The helical transmembrane segment at 10-29 (WRAIFAEFFATLFYVFFGLG) threads the bilayer. Over 30–41 (ASLRWAPGPLHV) the chain is Extracellular. A helical transmembrane segment spans residues 42–59 (LQVALAFGLALAXLVQTV). The Cytoplasmic segment spans residues 60–61 (GH). Residues 62-77 (ISGAHVNPAVTFXFLV) constitute an intramembrane region (discontinuously helical). Positions 68–70 (NPA) match the NPA 1 motif. At 78–82 (GSQMS) the chain is on the cytoplasmic side. Residues 83-106 (LLRAFCYMAAQLLGAVAGAAVLYS) traverse the membrane as a helical segment. Residues 107-127 (VTPPAVRGNLALNTLHAGVSV) lie on the Extracellular side of the membrane. The helical transmembrane segment at 128–148 (XQATTVEIFLTLQFVLCIFAT) threads the bilayer. Residues 149 to 156 (YDERRNGR) are Cytoplasmic-facing. Residues 157–175 (LGSVALAVGFSLTLGHLFG) traverse the membrane as a helical segment. Topologically, residues 176–178 (MYY) are extracellular. Positions 179-193 (TGAGMNPARSFAPAI) form an intramembrane region, discontinuously helical. The NPA 2 signature appears at 184–186 (NPA). The Extracellular portion of the chain corresponds to 194–200 (LTRNFTN). Residues 201-222 (HWVYWVGPIIGGGLGSLLYDFL) traverse the membrane as a helical segment. Residues 223 to 263 (LFPRLKSVSERLSILKGTRPSDNNGQPEGTGEPVELKTQAL) lie on the Cytoplasmic side of the membrane. An interaction with CALM region spans residues 227 to 237 (LKSVSERLSIL). Residues Ser235 and Ser243 each carry the phosphoserine modification. Residues 238–263 (KGTRPSDNNGQPEGTGEPVELKTQAL) form a disordered region. Deamidated asparagine; by deterioration is present on residues Asn245 and Asn246.

The protein belongs to the MIP/aquaporin (TC 1.A.8) family. Homotetramer; each monomer provides an independent water pore. Two homotetramers on opposing membranes can dimerize, forming a cell-cell junction. Interacts with CALM; the calcium-calmodulin/CALM complex interacts with the cytoplasmic domains of two aquaporins, leading to channel closure. Interacts with BFSP1 (via C-terminus); prevents calcium-dependent inhibition of the water channel activity. In terms of processing, subject to partial proteolytic cleavage in the eye lens core. Partial proteolysis promotes interactions between tetramers from adjoining membranes. Post-translationally, fatty acylated at Met-1 and Lys-238. The acyl modifications, in decreasing order of ion abundance, are: oleoyl (C18:1) &gt; palmitoyl (C16:0) &gt; stearoyl (C18:0) &gt; eicosenoyl (C20:1) &gt; dihomo-gamma-linolenoyl (C20:3) &gt; palmitoleoyl (C16:1) &gt; eicosadienoyl (C20:2). In terms of tissue distribution, detected in eye lens (at protein level).

Its subcellular location is the cell membrane. The protein localises to the cell junction. It catalyses the reaction H2O(in) = H2O(out). Its activity is regulated as follows. The water channel activity is inhibited by calcium through calmodulin/CALM. In terms of biological role, aquaporins form homotetrameric transmembrane channels, with each monomer independently mediating water transport across the plasma membrane along its osmotic gradient. Specifically expressed in lens fiber cells, this aquaporin is crucial for maintaining lens water homeostasis and transparency. Beyond water permeability, it also acts as a cell-to-cell adhesion molecule, forming thin junctions between lens fiber cells that are essential for maintaining the ordered structure and transparency of the lens. The chain is Lens fiber major intrinsic protein from Cavia porcellus (Guinea pig).